A 346-amino-acid chain; its full sequence is Probable WRKY transcription factor 54 (346 aa).

The interval 109–130 is disordered; sequence PVSCNGGDSGESKKKRLGVGKG. The span at 121 to 130 shows a compositional bias: basic residues; that stretch reads KKKRLGVGKG. Positions 146–214 form a DNA-binding region, WRKY; it reads VEAKSSEDRY…YIGYHTCTAN (69 aa). A compositionally biased stretch (basic and acidic residues) spans 267–282; sequence VKEEQNNNGDQSKDYY. A disordered region spans residues 267 to 286; sequence VKEEQNNNGDQSKDYYEGSS.

It belongs to the WRKY group III family. Interacts with WRKY30. Binds to BZR2/BES1 to cooperatively regulate the expression of target genes. Interacts with ASK7/BIN2. In terms of processing, phosphorylated and destabilized by ASK7/BIN2. As to expression, expressed in leaves.

The protein localises to the nucleus. Its function is as follows. Transcription factor. Interacts specifically with the W box (5'-(T)TGAC[CT]-3'), a frequently occurring elicitor-responsive cis-acting element. Together with WRKY70, negative regulator of developmental senescence, probably via the regulation of several senescence-associated markers genes. Positive regulator of EDS1-dependent defense against E.amylovora. In collaboration with WRKY70, prevents stomatal closure and, consequently, osmotic stress tolerance. Together with WRKY46 and WRKY70, promotes brassinosteroid (BR)-regulated plant growth but prevent drought response by modulating gene expression. Negative regulator of SA biosynthesis. Prevents defense response to the necrotrophic pathogens P.carotovorum and B.cinerea, but promotes defense against biotrophic/hemibiotrophic pathogens P.syringae pv. tomato (Pst) DC3000, probably by regulating negatively the jasmonic acid (JA)/ethylene (ET) and positively the salicylic acid (SA) signaling pathways. The chain is Probable WRKY transcription factor 54 from Arabidopsis thaliana (Mouse-ear cress).